Reading from the N-terminus, the 154-residue chain is uncharacterized protein (154 aa).

This is an uncharacterized protein from Saccharomyces cerevisiae (strain ATCC 204508 / S288c) (Baker's yeast).